We begin with the raw amino-acid sequence, 184 residues long: MKNVTDSFVSLGHWPYAGSFGFNTDILATNPINLSVVLGVLIFFGKGVLSDLLDNRKQRILSTIRNSEELRGAAIEQLEKARTRLRKVEIEADEFRVNGYSEIEREKSNLINAASENLERLENYKNETIRFEQQKAINQVRQRVFQQALQGALGTLNSCLNKELHLRAISSNISILGAMKEIMD.

A helical membrane pass occupies residues 27–49; that stretch reads LATNPINLSVVLGVLIFFGKGVL.

It belongs to the ATPase B chain family. As to quaternary structure, F-type ATPases have 2 components, F(1) - the catalytic core - and F(0) - the membrane proton channel. F(1) has five subunits: alpha(3), beta(3), gamma(1), delta(1), epsilon(1). F(0) has four main subunits: a(1), b(1), b'(1) and c(10-14). The alpha and beta chains form an alternating ring which encloses part of the gamma chain. F(1) is attached to F(0) by a central stalk formed by the gamma and epsilon chains, while a peripheral stalk is formed by the delta, b and b' chains.

The protein resides in the plastid. Its subcellular location is the chloroplast thylakoid membrane. In terms of biological role, f(1)F(0) ATP synthase produces ATP from ADP in the presence of a proton or sodium gradient. F-type ATPases consist of two structural domains, F(1) containing the extramembraneous catalytic core and F(0) containing the membrane proton channel, linked together by a central stalk and a peripheral stalk. During catalysis, ATP synthesis in the catalytic domain of F(1) is coupled via a rotary mechanism of the central stalk subunits to proton translocation. Component of the F(0) channel, it forms part of the peripheral stalk, linking F(1) to F(0). This chain is ATP synthase subunit b, chloroplastic, found in Piper cenocladum (Ant piper).